Here is a 501-residue protein sequence, read N- to C-terminus: Aldehyde dehydrogenase, cytosolic 1 (501 aa).

NAD(+) is bound at residue 246-251; it reads GSTEVG. Glu269 functions as the Proton acceptor in the catalytic mechanism. Cys303 functions as the Nucleophile in the catalytic mechanism.

This sequence belongs to the aldehyde dehydrogenase family. As to quaternary structure, homotetramer. In terms of tissue distribution, eye specific, with very high expression in the lens.

The protein resides in the cytoplasm. It catalyses the reaction an aldehyde + NAD(+) + H2O = a carboxylate + NADH + 2 H(+). It participates in alcohol metabolism; ethanol degradation; acetate from ethanol: step 2/2. Its function is as follows. Major component of the eye of elephant shrews, which in contrast to other mammals, possesses both a lens- and a non-lens class-1 aldehyde dehydrogenase 1. This eye-specific form is a structural protein of the lens and, in other part of the eye, serves as the major form of ALDH1. Can convert/oxidize retinaldehyde to retinoic acid. The polypeptide is Aldehyde dehydrogenase, cytosolic 1 (ALDH1) (Macroscelides proboscideus (Short-eared elephant shrew)).